Consider the following 213-residue polypeptide: Outer-membrane lipoprotein carrier protein (213 aa).

Residues 1–23 form the signal peptide; it reads MKKLLKQSLLGFALVSMTGAAFA.

Belongs to the LolA family. Monomer.

Its subcellular location is the periplasm. Participates in the translocation of lipoproteins from the inner membrane to the outer membrane. Only forms a complex with a lipoprotein if the residue after the N-terminal Cys is not an aspartate (The Asp acts as a targeting signal to indicate that the lipoprotein should stay in the inner membrane). This chain is Outer-membrane lipoprotein carrier protein, found in Actinobacillus pleuropneumoniae serotype 3 (strain JL03).